The sequence spans 211 residues: Probable oligoribonuclease (211 aa).

Residues 38–202 (IVWMDLEMTG…DDIRESIKEL (165 aa)) enclose the Exonuclease domain. The active site involves Tyr159.

The protein belongs to the oligoribonuclease family.

3'-to-5' exoribonuclease specific for small oligoribonucleotides. The chain is Probable oligoribonuclease from Drosophila melanogaster (Fruit fly).